We begin with the raw amino-acid sequence, 140 residues long: Large ribosomal subunit protein uL11 (140 aa).

This sequence belongs to the universal ribosomal protein uL11 family. Part of the ribosomal stalk of the 50S ribosomal subunit. Interacts with L10 and the large rRNA to form the base of the stalk. L10 forms an elongated spine to which L12 dimers bind in a sequential fashion forming a multimeric L10(L12)X complex. Post-translationally, one or more lysine residues are methylated.

Its function is as follows. Forms part of the ribosomal stalk which helps the ribosome interact with GTP-bound translation factors. The sequence is that of Large ribosomal subunit protein uL11 from Campylobacter hominis (strain ATCC BAA-381 / DSM 21671 / CCUG 45161 / LMG 19568 / NCTC 13146 / CH001A).